Reading from the N-terminus, the 210-residue chain is Ribosomal RNA small subunit methyltransferase G (210 aa).

S-adenosyl-L-methionine-binding positions include Gly-76, Met-81, 127-128, and Arg-145; that span reads VE.

Belongs to the methyltransferase superfamily. RNA methyltransferase RsmG family.

The protein resides in the cytoplasm. The catalysed reaction is guanosine(527) in 16S rRNA + S-adenosyl-L-methionine = N(7)-methylguanosine(527) in 16S rRNA + S-adenosyl-L-homocysteine. Functionally, specifically methylates the N7 position of guanine in position 527 of 16S rRNA. The sequence is that of Ribosomal RNA small subunit methyltransferase G from Acinetobacter baumannii (strain SDF).